The sequence spans 313 residues: Acetyl-coenzyme A carboxylase carboxyl transferase subunit alpha (313 aa).

The CoA carboxyltransferase C-terminal domain occupies 42–292 (KSDKLLRDTY…GAAIGEELDK (251 aa)).

This sequence belongs to the AccA family. As to quaternary structure, acetyl-CoA carboxylase is a heterohexamer composed of biotin carboxyl carrier protein (AccB), biotin carboxylase (AccC) and two subunits each of ACCase subunit alpha (AccA) and ACCase subunit beta (AccD).

It localises to the cytoplasm. It catalyses the reaction N(6)-carboxybiotinyl-L-lysyl-[protein] + acetyl-CoA = N(6)-biotinyl-L-lysyl-[protein] + malonyl-CoA. The protein operates within lipid metabolism; malonyl-CoA biosynthesis; malonyl-CoA from acetyl-CoA: step 1/1. Functionally, component of the acetyl coenzyme A carboxylase (ACC) complex. First, biotin carboxylase catalyzes the carboxylation of biotin on its carrier protein (BCCP) and then the CO(2) group is transferred by the carboxyltransferase to acetyl-CoA to form malonyl-CoA. The protein is Acetyl-coenzyme A carboxylase carboxyl transferase subunit alpha of Rhizorhabdus wittichii (strain DSM 6014 / CCUG 31198 / JCM 15750 / NBRC 105917 / EY 4224 / RW1) (Sphingomonas wittichii).